The sequence spans 606 residues: DNA ligase (606 aa).

ATP is bound at residue Glu-263. Lys-265 acts as the N6-AMP-lysine intermediate in catalysis. ATP-binding residues include Arg-270, Arg-285, Glu-315, Phe-355, Arg-432, and Lys-438.

Belongs to the ATP-dependent DNA ligase family. It depends on Mg(2+) as a cofactor. Requires Mn(2+) as cofactor.

The catalysed reaction is ATP + (deoxyribonucleotide)n-3'-hydroxyl + 5'-phospho-(deoxyribonucleotide)m = (deoxyribonucleotide)n+m + AMP + diphosphate.. The enzyme catalyses ADP + (deoxyribonucleotide)n-3'-hydroxyl + 5'-phospho-(deoxyribonucleotide)m = (deoxyribonucleotide)n+m + AMP + phosphate.. It catalyses the reaction GTP + (deoxyribonucleotide)n-3'-hydroxyl + 5'-phospho-(deoxyribonucleotide)m = (deoxyribonucleotide)n+m + GMP + diphosphate.. In terms of biological role, DNA ligase that seals nicks in double-stranded DNA during DNA replication, DNA recombination and DNA repair. Can use ATP, ADP and GTP, but not CTP, TTP or NAD(+). The chain is DNA ligase from Sulfophobococcus zilligii.